We begin with the raw amino-acid sequence, 228 residues long: Sodium channel regulatory subunit beta-4 (228 aa).

An N-terminal signal peptide occupies residues 1–30 (MPGAGDGGKAPARWLGTGLLGLFLLPVTLS). An Ig-like C2-type domain is found at 31 to 148 (LEVSVGKATD…NNLQHHATIF (118 aa)). Residues 31–162 (LEVSVGKATD…DRLEEVDNTV (132 aa)) are Extracellular-facing. 3 N-linked (GlcNAc...) asparagine glycosylation sites follow: Asn45, Asn71, and Asn113. The cysteines at positions 53 and 131 are disulfide-linked. A helical membrane pass occupies residues 163–183 (TLIILAVVGGVIGLLILILLI). At 184–228 (KKLIIFILKKTREKKKECLVSSSGNDNTENGLPGSKAEEKPPSKV) the chain is on the cytoplasmic side. The disordered stretch occupies residues 200-228 (ECLVSSSGNDNTENGLPGSKAEEKPPSKV). Polar residues predominate over residues 203–213 (VSSSGNDNTEN). The segment covering 219-228 (KAEEKPPSKV) has biased composition (basic and acidic residues).

Belongs to the sodium channel auxiliary subunit SCN4B (TC 8.A.17) family. A voltage-gated sodium (Nav) channel consists of an ion-conducting pore-forming alpha subunit functional on its own that is regulated by one or more beta subunits. The beta subunit SCN4B is disulfide-linked to the pore-forming alpha subunit. Interacts with SCN1A; regulatory subunit of SCN1A/Nav1.1. Interacts with SCN2A; regulatory subunit of SCN2A/Nav1.2. Contains an interchain disulfide bond with SCN2A. In terms of processing, N-glycosylated. In terms of tissue distribution, expressed at a high level in dorsal root ganglia, at a lower level in brain, spinal cord, skeletal muscle and heart. Expressed in the atrium.

The protein resides in the cell membrane. Regulatory subunit of multiple voltage-gated sodium (Nav) channels directly mediating the depolarization of excitable membranes. Navs, also called VGSCs (voltage-gated sodium channels) or VDSCs (voltage-dependent sodium channels), operate by switching between closed and open conformations depending on the voltage difference across the membrane. In the open conformation they allow Na(+) ions to selectively pass through the pore, along their electrochemical gradient. The influx of Na+ ions provokes membrane depolarization, initiating the propagation of electrical signals throughout cells and tissues. The accessory beta subunits participate in localization and functional modulation of the Nav channels. Modulates the activity of SCN1A/Nav1.1. Modulates the activity of SCN2A/Nav1.2. This chain is Sodium channel regulatory subunit beta-4, found in Homo sapiens (Human).